We begin with the raw amino-acid sequence, 199 residues long: Recombination protein RecR (199 aa).

The C4-type zinc-finger motif lies at 58–73; it reads CSVCYGLADSDPCHIC. The Toprim domain maps to 81 to 176; sequence DVVCVVEQGT…KITRIASGVP (96 aa).

Belongs to the RecR family.

In terms of biological role, may play a role in DNA repair. It seems to be involved in an RecBC-independent recombinational process of DNA repair. It may act with RecF and RecO. The polypeptide is Recombination protein RecR (Desulfatibacillum aliphaticivorans).